A 184-amino-acid chain; its full sequence is Ribosome-recycling factor (184 aa).

The protein belongs to the RRF family.

It is found in the cytoplasm. Functionally, responsible for the release of ribosomes from messenger RNA at the termination of protein biosynthesis. May increase the efficiency of translation by recycling ribosomes from one round of translation to another. The sequence is that of Ribosome-recycling factor from Oleidesulfovibrio alaskensis (strain ATCC BAA-1058 / DSM 17464 / G20) (Desulfovibrio alaskensis).